The primary structure comprises 387 residues: Short-chain dehydrogenase/reductase family 42E member 1 (387 aa).

Y149 acts as the Proton acceptor in catalysis. Position 153 (K153) interacts with NAD(+). A run of 2 helical transmembrane segments spans residues 279–299 (LPIS…FVVG) and 365–385 (ILDV…LPVV).

It belongs to the 3-beta-HSD family.

It is found in the membrane. The chain is Short-chain dehydrogenase/reductase family 42E member 1 (sdr42e1) from Danio rerio (Zebrafish).